The sequence spans 134 residues: Small ribosomal subunit protein bS16 (134 aa).

Residues 115–134 (AKLRRRQAKKAAEAAGSAEG) are disordered.

Belongs to the bacterial ribosomal protein bS16 family.

This is Small ribosomal subunit protein bS16 from Chlorobaculum tepidum (strain ATCC 49652 / DSM 12025 / NBRC 103806 / TLS) (Chlorobium tepidum).